A 449-amino-acid chain; its full sequence is Glutathione reductase (449 aa).

Serine 15, glycine 16, glutamate 35, threonine 42, cysteine 43, and lysine 51 together coordinate FAD. Residue serine 15 participates in glutathione binding. Cysteine 43 and cysteine 48 are oxidised to a cystine. Tyrosine 99 contacts glutathione. Alanine 115 contacts FAD. Glycine 175, isoleucine 178, glutamate 181, arginine 198, arginine 204, and glycine 261 together coordinate NADP(+). The FAD site is built by aspartate 302 and threonine 310. Alanine 340 serves as a coordination point for NADP(+). Histidine 435 is a binding site for FAD. The active-site Proton acceptor is histidine 435.

It belongs to the class-I pyridine nucleotide-disulfide oxidoreductase family. In terms of assembly, homodimer. It depends on FAD as a cofactor.

Its subcellular location is the cytoplasm. The enzyme catalyses 2 glutathione + NADP(+) = glutathione disulfide + NADPH + H(+). It functions in the pathway xenobiotic degradation; (2,4,5-trichlorophenoxy)acetate degradation. Catalyzes the reduction of glutathione disulfide (GSSG) to reduced glutathione (GSH). Constitutes the major mechanism to maintain a high GSH:GSSG ratio in the cytosol. This chain is Glutathione reductase (gor), found in Burkholderia cepacia (Pseudomonas cepacia).